A 337-amino-acid polypeptide reads, in one-letter code: tRNA N6-adenosine threonylcarbamoyltransferase (337 aa).

Residues H111 and H115 each contribute to the Fe cation site. Substrate contacts are provided by residues L134–G138, D167, G180, and N272. D300 contacts Fe cation.

Belongs to the KAE1 / TsaD family. Fe(2+) serves as cofactor.

It is found in the cytoplasm. It carries out the reaction L-threonylcarbamoyladenylate + adenosine(37) in tRNA = N(6)-L-threonylcarbamoyladenosine(37) in tRNA + AMP + H(+). Required for the formation of a threonylcarbamoyl group on adenosine at position 37 (t(6)A37) in tRNAs that read codons beginning with adenine. Is involved in the transfer of the threonylcarbamoyl moiety of threonylcarbamoyl-AMP (TC-AMP) to the N6 group of A37, together with TsaE and TsaB. TsaD likely plays a direct catalytic role in this reaction. The protein is tRNA N6-adenosine threonylcarbamoyltransferase of Salmonella typhi.